The following is an 85-amino-acid chain: Large ribosomal subunit protein bL27 (85 aa).

It belongs to the bacterial ribosomal protein bL27 family.

This is Large ribosomal subunit protein bL27 from Solibacter usitatus (strain Ellin6076).